The chain runs to 396 residues: Ornithine aminotransferase (396 aa).

Lys255 carries the post-translational modification N6-(pyridoxal phosphate)lysine.

It belongs to the class-III pyridoxal-phosphate-dependent aminotransferase family. OAT subfamily. Requires pyridoxal 5'-phosphate as cofactor.

The protein localises to the cytoplasm. The catalysed reaction is a 2-oxocarboxylate + L-ornithine = L-glutamate 5-semialdehyde + an L-alpha-amino acid. It functions in the pathway amino-acid biosynthesis; L-proline biosynthesis; L-glutamate 5-semialdehyde from L-ornithine: step 1/1. Catalyzes the interconversion of ornithine to glutamate semialdehyde. This chain is Ornithine aminotransferase, found in Bacillus cereus (strain 03BB102).